The chain runs to 84 residues: Magnetosome protein MamR (84 aa).

It belongs to the magnetosome MamR family.

The protein localises to the magnetosome. Functionally, may play a role in controlling magnetite number and size. Coexpression of mamLQRBIEMO in a deletion of the 17 gene mamAB operon restores magnetosome vesicle formation but not magnetite biosynthesis. This is Magnetosome protein MamR from Magnetospirillum gryphiswaldense (strain DSM 6361 / JCM 21280 / NBRC 15271 / MSR-1).